A 511-amino-acid chain; its full sequence is MDPESLGVRDSDLVRAGLAIGVAILAIIVLFPGIRYKGGLVNNKKPFELSWTNAKRRFQSGARGLITTAFNQNDGKHKDAFYMVTDNGVEMIIHPKYAHEIRNDERFSISAYNEQSFHGRIPGFEMFKENVVEEQLFINAVRSRLTRSLGKLLGPISEEVTSALRQHWTDNKEWHSISLHSAVLPVIAQQSSRVFLGEELCHNADWMRITVNHTVSFFMAVEALRVWPKILRPLAARFSPMCKNLRAEIEEARRIITPILENRRAQQQAHSKHAASTRPNDLIEWLEETADGRSYDAARAQLKISVAAIHTTSDLLTQTLFNIADKPALIQDLRKEIMSTIGTHGWEKAALYNLKLMDSVLKETQRLKPISIGTMVRVTLDDVTLSDGLRIPKGTKTLVSCHNMWDKGIYDHADQFDGYRFYELRKLPGQENSSQLVSTSPDHFAFGHGLHACPGRFFAAAEVKITLCHILLKYDIRLVGERPNVIEHGVAQYANAWGQIEIKRREEEIAL.

A helical transmembrane segment spans residues 14–34 (VRAGLAIGVAILAIIVLFPGI). Residue C453 participates in heme binding.

Belongs to the cytochrome P450 family. It depends on heme as a cofactor.

It localises to the membrane. The protein operates within secondary metabolite biosynthesis; terpenoid biosynthesis. Cytochrome P450 monooxygenase; part of the cluster that mediates the biosynthesis of shearones, diterpenoid pyrones (DPs) which are structurally diverse meroterpenoids consisting of a diterpene linked by a pyrone, and which may exhibit a range of bioactivities. Whitin the pathway, esdpI takes part in the molecular scaffold modification via the hydroxylation at C-20 and can transform shearone C into shearone G. The molecular scaffold is commonly biosynthesized by a series of enzymes including the non-reducing polyketide synthase (NR-PKS) esdpA that generates an alpha-pyrone; the prenyltransferase esdpC that attaches a geranylgeranyl pyrophosphate (GGPP) produced by the GGPP synthase (GGPPS) esdpD onto the pyrone unit; the FAD-dependent monooxygenase esdpE that converts an olefin on the diterpene unit into an epoxide; and the terpene cyclase esdpB that catalyzes the cyclization reactions to give the molecular backbone shearone A. In the modification steps, esdpF oxidizes the hydroxy group to a ketone at C-3 and esdpG then attaches hydroxy groups at both C-11 and C-12. After that, esdpI hydroxylates at C-20 and esdpH hydroxylates at C-6'. The ether bridge is generated by nucleophilic attack of the hydroxy group at C-20 to the carbonyl carbon at C-3. EsdpH can also functions prior to esdpI. The different combinations of these modification enzymes lead to the production of diverse shearone derivatives, shearone I being the end product of the pathway. The alpha-ketoglutarate-dependent dioxygenase esdpJ seems not to be involved in this pathway. The chain is Cytochrome P450 monooxygenase esdpI from Penicillium shearii (Eupenicillium shearii).